The primary structure comprises 407 residues: Succinate--CoA ligase [ADP-forming] subunit beta, hydrogenosomal (407 aa).

The N-terminal 9 residues, 1–9 (MLSSSFARN), are a transit peptide targeting the hydrogenosome. Positions 18 to 261 (KEICAKYNVA…LKQVNPFEIR (244 aa)) constitute an ATP-grasp domain. ATP-binding positions include lysine 55, 62–64 (GRG), and glutamate 124. Mg(2+) contacts are provided by asparagine 216 and aspartate 230. Substrate contacts are provided by residues asparagine 281 and 338-340 (GIV).

This sequence belongs to the succinate/malate CoA ligase beta subunit family. In terms of assembly, heterodimer of an alpha and a beta subunit. Mg(2+) serves as cofactor.

The protein localises to the hydrogenosome. The catalysed reaction is succinate + ATP + CoA = succinyl-CoA + ADP + phosphate. It functions in the pathway carbohydrate metabolism; tricarboxylic acid cycle; succinate from succinyl-CoA (ligase route): step 1/1. Functionally, succinyl-CoA synthetase functions in the citric acid cycle (TCA), coupling the hydrolysis of succinyl-CoA to the synthesis of ATP and thus represents the only step of substrate-level phosphorylation in the TCA. The beta subunit provides nucleotide specificity of the enzyme and binds the substrate succinate, while the binding sites for coenzyme A and phosphate are found in the alpha subunit. In Trichomonas vaginalis, this protein is Succinate--CoA ligase [ADP-forming] subunit beta, hydrogenosomal.